A 474-amino-acid chain; its full sequence is Tubulin gamma-1 chain (474 aa).

Ala-142–Gly-148 is a binding site for GTP.

Belongs to the tubulin family. In terms of assembly, gamma-tubulin complex is composed of gamma-tubulin and GCP proteins.

The protein resides in the cytoplasm. Its subcellular location is the cytoskeleton. It is found in the microtubule organizing center. It localises to the nucleus. The protein localises to the cell cortex. Functionally, tubulin is the major constituent of microtubules. The gamma chain is found at microtubule organizing centers (MTOC) such as the spindle poles, suggesting that it is involved in the minus-end nucleation of microtubule assembly. In terms of biological role, gamma-tubulin complex is essential for the control of microtubular network remodeling in the course of initiation and development of giant-feeding cells, and for the successful reproduction of nematodes (e.g. Meloidogyne spp.) in their plant hosts. The polypeptide is Tubulin gamma-1 chain (TUBG1) (Arabidopsis thaliana (Mouse-ear cress)).